The following is a 57-amino-acid chain: Small ribosomal subunit protein bS21 (57 aa).

This sequence belongs to the bacterial ribosomal protein bS21 family.

This is Small ribosomal subunit protein bS21 from Geobacillus kaustophilus (strain HTA426).